The sequence spans 21 residues: Fibrinogen beta chain (21 aa).

Glutamine 1 bears the Pyrrolidone carboxylic acid mark. Residue tyrosine 6 is modified to Sulfotyrosine.

Heterohexamer; disulfide linked. Contains 2 sets of 3 non-identical chains (alpha, beta and gamma). The 2 heterotrimers are in head to head conformation with the N-termini in a small central domain. Conversion of fibrinogen to fibrin is triggered by thrombin, which cleaves fibrinopeptides A and B from alpha and beta chains, and thus exposes the N-terminal polymerization sites responsible for the formation of the soft clot.

The protein localises to the secreted. Functionally, cleaved by the protease thrombin to yield monomers which, together with fibrinogen alpha (FGA) and fibrinogen gamma (FGG), polymerize to form an insoluble fibrin matrix. Fibrin has a major function in hemostasis as one of the primary components of blood clots. In addition, functions during the early stages of wound repair to stabilize the lesion and guide cell migration during re-epithelialization. Was originally thought to be essential for platelet aggregation, based on in vitro studies using anticoagulated blood. However subsequent studies have shown that it is not absolutely required for thrombus formation in vivo. Enhances expression of SELP in activated platelets. Maternal fibrinogen is essential for successful pregnancy. Fibrin deposition is also associated with infection, where it protects against IFNG-mediated hemorrhage. May also facilitate the antibacterial immune response via both innate and T-cell mediated pathways. The polypeptide is Fibrinogen beta chain (FGB) (Odocoileus hemionus (Mule deer)).